Here is a 453-residue protein sequence, read N- to C-terminus: MESSILDSLGVEIIGVMAPVSICMFLVVLLTYSLSVTSDPQIRSAANLIYIENPSDSTTVKLEGSLANAIVFVVLIAAVTFILVLLFYYNFTNFLKHYMRFSAFFVLGTMGGAIFLSIIQHFSIPVDSITCFILLFNFTILGTLSVFAGGIPIVLRQCYMVVMGIVVAAWFTKLPEWTTWFILVALALYDLVAVLAPGGPLKLLVELASSRDEELPAMVYEARPTVSSGNQRRNRGSSLRALVGGGGVSDSGSVELQAVRNHDVNQLGRENSHNMDYNAIAVRDIDNVDDGIGNGSRGGLERSPLVGSPSASEHSTSVGTRGNMEDRESVMDEEMSPLVELMGWGDNREEARGLEESDNVVDISNRGIKLGLGDFIFYSVLVGRAAMYDLMTVYACYLAIISGLGCTLILLSVYNRALPALPISIMLGVVFYFLTRLLMEPFVVGVTTNLMMF.

Residues 1-8 (MESSILDS) are Cytoplasmic-facing. A helical transmembrane segment spans residues 9-29 (LGVEIIGVMAPVSICMFLVVL). Residues 30-68 (LTYSLSVTSDPQIRSAANLIYIENPSDSTTVKLEGSLAN) are Lumenal-facing. Residues 69–89 (AIVFVVLIAAVTFILVLLFYY) traverse the membrane as a helical segment. Over 90–103 (NFTNFLKHYMRFSA) the chain is Cytoplasmic. The helical transmembrane segment at 104-124 (FFVLGTMGGAIFLSIIQHFSI) threads the bilayer. Residues 125–132 (PVDSITCF) lie on the Lumenal side of the membrane. Residues 133-153 (ILLFNFTILGTLSVFAGGIPI) form a helical membrane-spanning segment. At 154–159 (VLRQCY) the chain is on the cytoplasmic side. Helical transmembrane passes span 160–180 (MVVM…WTTW) and 181–201 (FILV…GGPL). Asp-190 is an active-site residue. The Cytoplasmic segment spans residues 202–369 (KLLVELASSR…VVDISNRGIK (168 aa)). Disordered regions lie at residues 226 to 248 (VSSG…GGGV) and 292 to 329 (IGNG…DRES). The segment covering 227 to 240 (SSGNQRRNRGSSLR) has biased composition (low complexity). Ser-296 is subject to Phosphoserine. Polar residues predominate over residues 309-320 (PSASEHSTSVGT). The chain crosses the membrane as a helical span at residues 370–390 (LGLGDFIFYSVLVGRAAMYDL). Asp-374 is a catalytic residue. Residues 391-392 (MT) lie on the Lumenal side of the membrane. A helical transmembrane segment spans residues 393–413 (VYACYLAIISGLGCTLILLSV). Residues 414–417 (YNRA) are Cytoplasmic-facing. The helical intramembrane region spans 418 to 438 (LPALPISIMLGVVFYFLTRLL). The short motif at 419-421 (PAL) is the PAL element. The Cytoplasmic segment spans residues 439–453 (MEPFVVGVTTNLMMF).

The protein belongs to the peptidase A22A family. Homodimer. Probable component of the gamma-secretase complex, a complex composed of a presenilin homodimer, nicastrin, APH1 and PEN2.

Its subcellular location is the endoplasmic reticulum membrane. The protein localises to the golgi apparatus membrane. In terms of biological role, probable subunit of the gamma-secretase complex, an endoprotease complex that catalyzes the intramembrane cleavage of integral membrane proteins such as Notch receptors. This chain is Presenilin-like protein At1g08700, found in Arabidopsis thaliana (Mouse-ear cress).